The sequence spans 508 residues: Flavonoid 3'-monooxygenase CYP75B137 (508 aa).

A helical membrane pass occupies residues 2–22 (LTFFFLWISTLLLSSFIVYLL). Residue C445 coordinates heme.

Belongs to the cytochrome P450 family. Heme serves as cofactor. As to expression, expressed in young cromes.

Its subcellular location is the membrane. It carries out the reaction a 3'-unsubstituted flavone + reduced [NADPH--hemoprotein reductase] + O2 = a 3'-hydroxyflavone + oxidized [NADPH--hemoprotein reductase] + H2O + H(+). It catalyses the reaction (2S)-naringenin + reduced [NADPH--hemoprotein reductase] + O2 = (S)-eriodictyol + oxidized [NADPH--hemoprotein reductase] + H2O + H(+). The enzyme catalyses (2R,3R)-dihydrokaempferol + reduced [NADPH--hemoprotein reductase] + O2 = (2R,3R)-dihydroquercetin + oxidized [NADPH--hemoprotein reductase] + H2O + H(+). The catalysed reaction is kaempferol + reduced [NADPH--hemoprotein reductase] + O2 = quercetin + oxidized [NADPH--hemoprotein reductase] + H2O + H(+). The protein operates within flavonoid metabolism. In terms of biological role, flavonoid 3'-hydroxylase that catalyzes the 3'-hydroxylation of flavanones, dihydroflavonols and flavonols. Converts narigenin to eriodictyol, dihydrokaempferol to dihydroquercetin and kaempferol to quercetin. The protein is Flavonoid 3'-monooxygenase CYP75B137 of Crocosmia x crocosmiiflora (Montbretia).